Here is a 146-residue protein sequence, read N- to C-terminus: ATP synthase epsilon chain (146 aa).

Positions 92–116 (ISVDQARRDRDSLRKKLNEHERSEQ) are enriched in basic and acidic residues. Residues 92 to 120 (ISVDQARRDRDSLRKKLNEHERSEQDPEV) are disordered.

Belongs to the ATPase epsilon chain family. F-type ATPases have 2 components, CF(1) - the catalytic core - and CF(0) - the membrane proton channel. CF(1) has five subunits: alpha(3), beta(3), gamma(1), delta(1), epsilon(1). CF(0) has three main subunits: a, b and c.

It localises to the cell membrane. Its function is as follows. Produces ATP from ADP in the presence of a proton gradient across the membrane. The polypeptide is ATP synthase epsilon chain (Cutibacterium acnes (strain DSM 16379 / KPA171202) (Propionibacterium acnes)).